We begin with the raw amino-acid sequence, 251 residues long: Triosephosphate isomerase (251 aa).

Asn-9–Lys-11 lines the substrate pocket. Residue His-95 is the Electrophile of the active site. Glu-167 (proton acceptor) is an active-site residue. Residues Gly-173, Ser-213, and Gly-234–Gly-235 contribute to the substrate site.

This sequence belongs to the triosephosphate isomerase family. Homodimer.

It is found in the cytoplasm. The enzyme catalyses D-glyceraldehyde 3-phosphate = dihydroxyacetone phosphate. It participates in carbohydrate biosynthesis; gluconeogenesis. It functions in the pathway carbohydrate degradation; glycolysis; D-glyceraldehyde 3-phosphate from glycerone phosphate: step 1/1. Functionally, involved in the gluconeogenesis. Catalyzes stereospecifically the conversion of dihydroxyacetone phosphate (DHAP) to D-glyceraldehyde-3-phosphate (G3P). The protein is Triosephosphate isomerase of Geobacter metallireducens (strain ATCC 53774 / DSM 7210 / GS-15).